Reading from the N-terminus, the 334-residue chain is Holliday junction branch migration complex subunit RuvB (334 aa).

A large ATPase domain (RuvB-L) region spans residues 1–182; sequence MDERLVSSEA…FGVMSRLEYY (182 aa). ATP is bound by residues Leu21, Arg22, Gly63, Lys66, Thr67, Thr68, 129-131, Arg172, Tyr182, and Arg219; that span reads EDF. Mg(2+) is bound at residue Thr67. Residues 183–253 are small ATPAse domain (RuvB-S); that stretch reads TQEELADIVT…ISQNALERLQ (71 aa). The interval 256-334 is head domain (RuvB-H); sequence RLGLDHIDHK…HFQMEAPRYD (79 aa). Arg311 and Arg316 together coordinate DNA.

This sequence belongs to the RuvB family. Homohexamer. Forms an RuvA(8)-RuvB(12)-Holliday junction (HJ) complex. HJ DNA is sandwiched between 2 RuvA tetramers; dsDNA enters through RuvA and exits via RuvB. An RuvB hexamer assembles on each DNA strand where it exits the tetramer. Each RuvB hexamer is contacted by two RuvA subunits (via domain III) on 2 adjacent RuvB subunits; this complex drives branch migration. In the full resolvosome a probable DNA-RuvA(4)-RuvB(12)-RuvC(2) complex forms which resolves the HJ. Homohexamer which interacts with RecU.

Its subcellular location is the cytoplasm. It carries out the reaction ATP + H2O = ADP + phosphate + H(+). In terms of biological role, the RuvA-RuvB-RuvC complex processes Holliday junction (HJ) DNA during genetic recombination and DNA repair, while the RuvA-RuvB complex plays an important role in the rescue of blocked DNA replication forks via replication fork reversal (RFR). RuvA specifically binds to HJ cruciform DNA, conferring on it an open structure. The RuvB hexamer acts as an ATP-dependent pump, pulling dsDNA into and through the RuvAB complex. RuvB forms 2 homohexamers on either side of HJ DNA bound by 1 or 2 RuvA tetramers; 4 subunits per hexamer contact DNA at a time. Coordinated motions by a converter formed by DNA-disengaged RuvB subunits stimulates ATP hydrolysis and nucleotide exchange. Immobilization of the converter enables RuvB to convert the ATP-contained energy into a lever motion, pulling 2 nucleotides of DNA out of the RuvA tetramer per ATP hydrolyzed, thus driving DNA branch migration. The RuvB motors rotate together with the DNA substrate, which together with the progressing nucleotide cycle form the mechanistic basis for DNA recombination by continuous HJ branch migration. Branch migration allows RuvC to scan DNA until it finds its consensus sequence, where it cleaves and resolves cruciform DNA. This Bacillus subtilis (strain 168) protein is Holliday junction branch migration complex subunit RuvB.